The following is a 281-amino-acid chain: Urease accessory protein UreD (281 aa).

The tract at residues 1-25 (MLNTLEPQPCETDALSPRLQRSTGS) is disordered.

The protein belongs to the UreD family. UreD, UreF and UreG form a complex that acts as a GTP-hydrolysis-dependent molecular chaperone, activating the urease apoprotein by helping to assemble the nickel containing metallocenter of UreC. The UreE protein probably delivers the nickel.

It localises to the cytoplasm. Its function is as follows. Required for maturation of urease via the functional incorporation of the urease nickel metallocenter. The sequence is that of Urease accessory protein UreD from Dinoroseobacter shibae (strain DSM 16493 / NCIMB 14021 / DFL 12).